The primary structure comprises 1156 residues: Protein hu-li tai shao (1156 aa).

Residues 1-36 are disordered; sequence MTEVEQPPQNGIDPTAGEDDDNSKARPADIEQDMRE. Basic and acidic residues predominate over residues 22 to 36; it reads NSKARPADIEQDMRE. A Phosphoserine modification is found at S478. Phosphothreonine occurs at positions 480 and 498. S603 is subject to Phosphoserine. The residue at position 608 (Y608) is a Phosphotyrosine. Residues T609 and T611 each carry the phosphothreonine modification. Phosphoserine is present on S614. At Y627 the chain carries Phosphotyrosine. The residue at position 630 (S630) is a Phosphoserine. Positions 897–956 are disordered; the sequence is FLPSNHALPKDTDANNRDQTDRERPEAEQEESFHCAGDSGIGDSTGRRPRLATTSNDSSI. Residues 904–929 show a composition bias toward basic and acidic residues; sequence LPKDTDANNRDQTDRERPEAEQEESF.

This sequence belongs to the aldolase class II family. Adducin subfamily. As to expression, isoform C is expressed in nurse cells. Isoform A is produced in the nurse cell but transported into the oocyte at stage 1, localizes to the oocyte cortex at stage 8 and to the anterior pole from day 9 onwards. Isoform B is expressed in the somatic follicle cells that surround the germline.

The protein localises to the cytoplasm. It is found in the cytoskeleton. Its subcellular location is the cell membrane. Functionally, required for assembling actin at ring canals in developing egg chambers. Probably interacts with other developmental proteins involved in nurse cell/oocyte transport through the ring canals. Important for normal neuromotor function. In Drosophila melanogaster (Fruit fly), this protein is Protein hu-li tai shao (hts).